We begin with the raw amino-acid sequence, 1143 residues long: DNA polymerase III subunit alpha (1143 aa).

The protein belongs to the DNA polymerase type-C family. DnaE subfamily. DNA polymerase III contains a core (composed of alpha, epsilon and theta chains) that associates with a tau subunit. This core dimerizes to form the PolIII' complex. PolIII' associates with the gamma complex (composed of gamma, delta, delta', psi and chi chains) and with the beta chain to form the complete DNA polymerase III complex.

It localises to the cytoplasm. The catalysed reaction is DNA(n) + a 2'-deoxyribonucleoside 5'-triphosphate = DNA(n+1) + diphosphate. Its function is as follows. DNA polymerase III is a complex, multichain enzyme responsible for most of the replicative synthesis in bacteria. This DNA polymerase also exhibits 3' to 5' exonuclease activity. The alpha chain is the DNA polymerase. This chain is DNA polymerase III subunit alpha (dnaE1), found in Caulobacter vibrioides (strain NA1000 / CB15N) (Caulobacter crescentus).